A 246-amino-acid polypeptide reads, in one-letter code: MVLNLLHLGRIGYAQGLELQRQLVEARHSGRIGNTLLLLEHPPVLTLGRNSERKNVLASDEFLAYRGVEIHEVNRGGDVTYHGPGQLVGYPILDLRSFAESGERGRLGAVEYVRWVEEALIRTCADFGVQTQRVAGRTGVWTLPGGSVEEKKIAAIGVHISRGITSHGFALNVTTDLRDFDLIVPCGISDRKVTSLELEVIDEPALTMEKVIHSAARQFGRVFGHQVLWLESPGDLLPELATLTQS.

The BPL/LPL catalytic domain occupies 30-227; sequence GRIGNTLLLL…QFGRVFGHQV (198 aa). Substrate is bound by residues 75 to 82, 155 to 157, and 168 to 170; these read RGGDVTYH, AIG, and GFA. C186 (acyl-thioester intermediate) is an active-site residue.

The protein belongs to the LipB family.

The protein localises to the cytoplasm. The enzyme catalyses octanoyl-[ACP] + L-lysyl-[protein] = N(6)-octanoyl-L-lysyl-[protein] + holo-[ACP] + H(+). The protein operates within protein modification; protein lipoylation via endogenous pathway; protein N(6)-(lipoyl)lysine from octanoyl-[acyl-carrier-protein]: step 1/2. In terms of biological role, catalyzes the transfer of endogenously produced octanoic acid from octanoyl-acyl-carrier-protein onto the lipoyl domains of lipoate-dependent enzymes. Lipoyl-ACP can also act as a substrate although octanoyl-ACP is likely to be the physiological substrate. The chain is Octanoyltransferase from Acidobacterium capsulatum (strain ATCC 51196 / DSM 11244 / BCRC 80197 / JCM 7670 / NBRC 15755 / NCIMB 13165 / 161).